We begin with the raw amino-acid sequence, 615 residues long: UvrABC system protein C (615 aa).

The region spanning 14–91 is the GIY-YIG domain; the sequence is TSPGCYIHKD…IKENKPKYNI (78 aa). The region spanning 196 to 231 is the UVR domain; sequence NKIIDELKGKMAAAAQTMEFERAAEYRDLIQAIGTL.

Belongs to the UvrC family. Interacts with UvrB in an incision complex.

It is found in the cytoplasm. Its function is as follows. The UvrABC repair system catalyzes the recognition and processing of DNA lesions. UvrC both incises the 5' and 3' sides of the lesion. The N-terminal half is responsible for the 3' incision and the C-terminal half is responsible for the 5' incision. This is UvrABC system protein C from Streptococcus pneumoniae (strain ATCC 700669 / Spain 23F-1).